We begin with the raw amino-acid sequence, 151 residues long: Large ribosomal subunit protein bL9 (151 aa).

Belongs to the bacterial ribosomal protein bL9 family.

In terms of biological role, binds to the 23S rRNA. The chain is Large ribosomal subunit protein bL9 from Bordetella bronchiseptica (strain ATCC BAA-588 / NCTC 13252 / RB50) (Alcaligenes bronchisepticus).